Consider the following 481-residue polypeptide: Chromosomal replication initiator protein DnaA (481 aa).

The tract at residues 1–71 (MTDLSAFWPQ…ETFAEDILGR (71 aa)) is domain I, interacts with DnaA modulators. Positions 71–143 (RPVTIELRIG…PAIGGGHEST (73 aa)) are domain II. A compositionally biased stretch (low complexity) spans 86-96 (ASAPAAASPRS). Positions 86–110 (ASAPAAASPRSPGRPAPAPVAATPT) are disordered. The domain III, AAA+ region stretch occupies residues 144–361 (RLNPAFTFES…GALKRVVAYS (218 aa)). Residues G189, G191, K192, and T193 each contribute to the ATP site. The tract at residues 362-481 (RFSNQPISLD…YAALQQMLRN (120 aa)) is domain IV, binds dsDNA.

The protein belongs to the DnaA family. As to quaternary structure, oligomerizes as a right-handed, spiral filament on DNA at oriC.

It localises to the cytoplasm. Functionally, plays an essential role in the initiation and regulation of chromosomal replication. ATP-DnaA binds to the origin of replication (oriC) to initiate formation of the DNA replication initiation complex once per cell cycle. Binds the DnaA box (a 9 base pair repeat at the origin) and separates the double-stranded (ds)DNA. Forms a right-handed helical filament on oriC DNA; dsDNA binds to the exterior of the filament while single-stranded (ss)DNA is stabiized in the filament's interior. The ATP-DnaA-oriC complex binds and stabilizes one strand of the AT-rich DNA unwinding element (DUE), permitting loading of DNA polymerase. After initiation quickly degrades to an ADP-DnaA complex that is not apt for DNA replication. Binds acidic phospholipids. This chain is Chromosomal replication initiator protein DnaA, found in Laribacter hongkongensis (strain HLHK9).